We begin with the raw amino-acid sequence, 519 residues long: 2-isopropylmalate synthase (519 aa).

In terms of domain architecture, Pyruvate carboxyltransferase spans 5–267 (VIIFDTTLRD…QTRINHKEIY (263 aa)). Residues Asp-14, His-202, His-204, and Asn-238 each contribute to the Mn(2+) site. The tract at residues 392–519 (VMNYFNTQSG…RKHHTTQEAV (128 aa)) is regulatory domain.

The protein belongs to the alpha-IPM synthase/homocitrate synthase family. LeuA type 1 subfamily. Homodimer. It depends on Mn(2+) as a cofactor.

Its subcellular location is the cytoplasm. It catalyses the reaction 3-methyl-2-oxobutanoate + acetyl-CoA + H2O = (2S)-2-isopropylmalate + CoA + H(+). The protein operates within amino-acid biosynthesis; L-leucine biosynthesis; L-leucine from 3-methyl-2-oxobutanoate: step 1/4. In terms of biological role, catalyzes the condensation of the acetyl group of acetyl-CoA with 3-methyl-2-oxobutanoate (2-ketoisovalerate) to form 3-carboxy-3-hydroxy-4-methylpentanoate (2-isopropylmalate). The protein is 2-isopropylmalate synthase of Proteus mirabilis (strain HI4320).